We begin with the raw amino-acid sequence, 490 residues long: Aspartyl/glutamyl-tRNA(Asn/Gln) amidotransferase subunit B (490 aa).

Belongs to the GatB/GatE family. GatB subfamily. In terms of assembly, heterotrimer of A, B and C subunits.

It catalyses the reaction L-glutamyl-tRNA(Gln) + L-glutamine + ATP + H2O = L-glutaminyl-tRNA(Gln) + L-glutamate + ADP + phosphate + H(+). The enzyme catalyses L-aspartyl-tRNA(Asn) + L-glutamine + ATP + H2O = L-asparaginyl-tRNA(Asn) + L-glutamate + ADP + phosphate + 2 H(+). In terms of biological role, allows the formation of correctly charged Asn-tRNA(Asn) or Gln-tRNA(Gln) through the transamidation of misacylated Asp-tRNA(Asn) or Glu-tRNA(Gln) in organisms which lack either or both of asparaginyl-tRNA or glutaminyl-tRNA synthetases. The reaction takes place in the presence of glutamine and ATP through an activated phospho-Asp-tRNA(Asn) or phospho-Glu-tRNA(Gln). This chain is Aspartyl/glutamyl-tRNA(Asn/Gln) amidotransferase subunit B, found in Prochlorococcus marinus (strain MIT 9515).